A 309-amino-acid chain; its full sequence is Porphobilinogen deaminase (309 aa).

Cysteine 244 carries the S-(dipyrrolylmethanemethyl)cysteine modification.

This sequence belongs to the HMBS family. As to quaternary structure, monomer. Dipyrromethane serves as cofactor.

It carries out the reaction 4 porphobilinogen + H2O = hydroxymethylbilane + 4 NH4(+). It functions in the pathway porphyrin-containing compound metabolism; protoporphyrin-IX biosynthesis; coproporphyrinogen-III from 5-aminolevulinate: step 2/4. In terms of biological role, tetrapolymerization of the monopyrrole PBG into the hydroxymethylbilane pre-uroporphyrinogen in several discrete steps. The chain is Porphobilinogen deaminase from Agrobacterium fabrum (strain C58 / ATCC 33970) (Agrobacterium tumefaciens (strain C58)).